We begin with the raw amino-acid sequence, 154 residues long: Peptide deformylase (154 aa).

Fe cation-binding residues include Cys90 and His132. Glu133 is an active-site residue. His136 contacts Fe cation.

The protein belongs to the polypeptide deformylase family. Requires Fe(2+) as cofactor.

The enzyme catalyses N-terminal N-formyl-L-methionyl-[peptide] + H2O = N-terminal L-methionyl-[peptide] + formate. In terms of biological role, removes the formyl group from the N-terminal Met of newly synthesized proteins. Requires at least a dipeptide for an efficient rate of reaction. N-terminal L-methionine is a prerequisite for activity but the enzyme has broad specificity at other positions. In Halothermothrix orenii (strain H 168 / OCM 544 / DSM 9562), this protein is Peptide deformylase.